A 597-amino-acid polypeptide reads, in one-letter code: Protein unc-93 homolog B1 (597 aa).

Positions Met-1–Pro-29 are disordered. 5 helical membrane passes run Val-64–Met-84, Lys-110–Ile-130, Phe-132–Thr-152, Thr-160–Gly-180, and Ile-223–Leu-243. N-linked (GlcNAc...) asparagine glycosylation is found at Asn-251 and Asn-272. Transmembrane regions (helical) follow at residues Leu-285–Gly-305, Leu-343–Leu-363, Leu-378–Trp-398, Val-403–Ala-423, and Val-428–Leu-448. Residue Asn-449 is glycosylated (N-linked (GlcNAc...) asparagine). 2 consecutive transmembrane segments (helical) span residues Phe-469–Ser-489 and Leu-491–Tyr-511. A disordered region spans residues Val-522–Gln-597. Phosphoserine is present on residues Ser-547 and Ser-550.

This sequence belongs to the unc-93 family. In terms of assembly, interacts with TLR3, TLR5, TLR7, and TLR9 (probably via transmembrane domain). N-glycosylated. In terms of tissue distribution, expressed in plasmocytoid dendritic cells (at protein level). Highly expressed in antigen-presenting cells. Expressed in heart, and at lower level in kidney. Expressed at low level in other tissues.

It localises to the endoplasmic reticulum membrane. Its subcellular location is the endosome. The protein resides in the lysosome. It is found in the cytoplasmic vesicle. The protein localises to the phagosome. Functionally, plays an important role in innate and adaptive immunity by regulating nucleotide-sensing Toll-like receptor (TLR) signaling. Required for the transport of a subset of TLRs (including TLR3, TLR7 and TLR9) from the endoplasmic reticulum to endolysosomes where they can engage pathogen nucleotides and activate signaling cascades. May play a role in autoreactive B-cells removal. The chain is Protein unc-93 homolog B1 from Homo sapiens (Human).